Consider the following 77-residue polypeptide: Defensin-like protein 91 (77 aa).

An N-terminal signal peptide occupies residues 1-27 (METKKISYFLLPSLMIVALIFQPMCSA). Cystine bridges form between Cys-38-Cys-75, Cys-43-Cys-64, Cys-49-Cys-73, and Cys-53-Cys-74.

Belongs to the DEFL family.

It localises to the secreted. This Arabidopsis thaliana (Mouse-ear cress) protein is Defensin-like protein 91 (LCR47).